The primary structure comprises 459 residues: Argininosuccinate lyase (459 aa).

Belongs to the lyase 1 family. Argininosuccinate lyase subfamily.

Its subcellular location is the cytoplasm. It catalyses the reaction 2-(N(omega)-L-arginino)succinate = fumarate + L-arginine. It functions in the pathway amino-acid biosynthesis; L-arginine biosynthesis; L-arginine from L-ornithine and carbamoyl phosphate: step 3/3. The protein is Argininosuccinate lyase of Bacillus licheniformis (strain ATCC 14580 / DSM 13 / JCM 2505 / CCUG 7422 / NBRC 12200 / NCIMB 9375 / NCTC 10341 / NRRL NRS-1264 / Gibson 46).